The primary structure comprises 320 residues: tRNA N6-adenosine threonylcarbamoyltransferase (320 aa).

The Fe cation site is built by H113 and H117. Residues 143 to 147 (VVSGG), D176, G189, D193, and N281 each bind substrate. D305 contributes to the Fe cation binding site.

Belongs to the KAE1 / TsaD family. The cofactor is Fe(2+).

The protein resides in the cytoplasm. It carries out the reaction L-threonylcarbamoyladenylate + adenosine(37) in tRNA = N(6)-L-threonylcarbamoyladenosine(37) in tRNA + AMP + H(+). In terms of biological role, required for the formation of a threonylcarbamoyl group on adenosine at position 37 (t(6)A37) in tRNAs that read codons beginning with adenine. Is involved in the transfer of the threonylcarbamoyl moiety of threonylcarbamoyl-AMP (TC-AMP) to the N6 group of A37, together with TsaE and TsaB. TsaD likely plays a direct catalytic role in this reaction. The sequence is that of tRNA N6-adenosine threonylcarbamoyltransferase from Mycoplasmoides gallisepticum (strain R(low / passage 15 / clone 2)) (Mycoplasma gallisepticum).